Here is a 521-residue protein sequence, read N- to C-terminus: Formate--tetrahydrofolate ligase (521 aa).

It belongs to the formate--tetrahydrofolate ligase family.

It catalyses the reaction (6S)-5,6,7,8-tetrahydrofolate + formate + ATP = (6R)-10-formyltetrahydrofolate + ADP + phosphate. The protein operates within one-carbon metabolism; tetrahydrofolate interconversion. This Ureaplasma parvum serovar 3 (strain ATCC 700970) protein is Formate--tetrahydrofolate ligase.